The chain runs to 1198 residues: MTKKPGGPGKNRAINMLKRGLPRVFPLVGVKRVVMSLLDGRGPVRFVLALITFFKFTALAPTKALLGRWKAVEKSVAMKHLTSFKRELGTLIDAVNKRGRKQNKRGGNEGSIMWLASLAVVIAYAGAMKLSNFQGKLLMTINNTDIADVIVIPTSKGENRCWVRAIDVGYMCEDTITYECPKLTMGNDPEDVDCWCDNQEVYVQYGRCTRTRHSKRSRRSVSVQTHGESSLVNKKEAWLDSTKATRYLMKTENWIIRNPGYAFLAATLGWMLGSNNGQRVVFTILLLLVAPAYSFNCLGMGNRDFIEGASGATWVDLVLEGDSCLTIMANDKPTLDVRMINIEASQLAEVRSYCYHASVTDISTVARCPTTGEAHNEKRADSSYVCKQGFTDRGWGNGCGLFGKGSIDTCAKFSCTSKAIGRTIQPENIKYEVGIFVHGTTTSENHGNYSAQVGASQAAKFTITPNAPSITLKLGDYGEVTLDCEPRSGLNTEAFYVMTVGSKSFLVHREWFHDLALPWTSPSSTAWRNRELLMEFEEAHATKQSVVALGSQEGGLHQALAGAIVVEYSSSVKLTSGHLKCRLKMDKLALKGTTYGMCTEKFSFAKNPADTGHGTVVIELSYSGSDGPCKIPIVSVASLNDMTPVGRLVTVNPFVATSSANSKVLVEMEPPFGDSYIVVGRGDKQINHHWHKAGSTLGKAFSTTLKGAQRLAALGDTAWDFGSIGGVFNSIGKAVHQVFGGAFRTLFGGMSWITQGLMGALLLWMGVNARDRSIALAFLATGGVLVFLATNVHADTGCAIDITRKEMRCGSGIFVHNDVEAWVDRYKYLPETPRSLAKIVHKAHKEGVCGVRSVTRLEHQMWEAVRDELNVLLKENAVDLSVVVNKPVGRYRSAPKRLSMTQEKFEMGWKAWGKSILFAPELANSTFVVDGPETKECPDEHRAWNSMQIEDFGFGITSTRVWLKIREESTDECDGAIIGTAVKGHVAVHSDLSYWIESRYNDTWKLERAVFGEVKSCTWPETHTLWGDGVEESELIIPHTIAGPKSKHNRREGYKTQNQGPWDENGIVLDFDYCPGTKVTITEDCGKRGPSVRTTTDSGKLITDWCCRSCSLPPLRFRTENGCWYGMEIRPVRHDETTLVRSQVDAFNGEMVDPFSAGPSGDVSGHPGGPSQEVDGQIDHSCGFGGPTCADAWGHHLH.

Residues 2–15 are interaction with host EXOC1; the sequence is TKKPGGPGKNRAIN. Over 2–109 the chain is Cytoplasmic; the sequence is TKKPGGPGKN…RKQNKRGGNE (108 aa). The segment at 37 to 72 is hydrophobic; homodimerization of capsid protein C; the sequence is LLDGRGPVRFVLALITFFKFTALAPTKALLGRWKAV. Positions 106–127 are cleaved as a propeptide — ER anchor for the capsid protein C, removed in mature form by serine protease NS3; it reads GGNEGSIMWLASLAVVIAYAGA. Residues 110 to 130 form a helical membrane-spanning segment; that stretch reads GSIMWLASLAVVIAYAGAMKL. Over 131–253 the chain is Extracellular; that stretch reads SNFQGKLLMT…ATRYLMKTEN (123 aa). Asparagine 142 is a glycosylation site (N-linked (GlcNAc...) asparagine; by host). The helical transmembrane segment at 254–274 threads the bilayer; sequence WIIRNPGYAFLAATLGWMLGS. The Cytoplasmic portion of the chain corresponds to 275–279; the sequence is NNGQR. The helical transmembrane segment at 280 to 294 threads the bilayer; it reads VVFTILLLLVAPAYS. Residues 295–746 lie on the Extracellular side of the membrane; it reads FNCLGMGNRD…QVFGGAFRTL (452 aa). 6 cysteine pairs are disulfide-bonded: cysteine 297/cysteine 324, cysteine 354/cysteine 410, cysteine 354/cysteine 415, cysteine 368/cysteine 399, cysteine 386/cysteine 410, and cysteine 386/cysteine 415. Positions 392–405 are fusion peptide; that stretch reads DRGWGNGCGLFGKG. Asparagine 448 carries an N-linked (GlcNAc...) asparagine; by host glycan. Disulfide bonds link cysteine 484–cysteine 581 and cysteine 598–cysteine 629. A helical transmembrane segment spans residues 747-767; sequence FGGMSWITQGLMGALLLWMGV. Over 768–773 the chain is Cytoplasmic; sequence NARDRS. Residues 774 to 794 traverse the membrane as a helical segment; that stretch reads IALAFLATGGVLVFLATNVHA. The Extracellular segment spans residues 795–1198; sequence DTGCAIDITR…CADAWGHHLH (404 aa). 6 disulfide bridges follow: cysteine 798–cysteine 809, cysteine 849–cysteine 937, cysteine 973–cysteine 1017, cysteine 1074–cysteine 1123, cysteine 1085–cysteine 1106, and cysteine 1107–cysteine 1110. N-linked (GlcNAc...) asparagine; by host glycosylation is found at asparagine 924 and asparagine 1001. The tract at residues 1152–1177 is disordered; that stretch reads VDPFSAGPSGDVSGHPGGPSQEVDGQ.

As to quaternary structure, homodimer. Interacts (via N-terminus) with host EXOC1 (via C-terminus); this interaction results in EXOC1 degradation through the proteasome degradation pathway. Interacts with host CAPRIN1; this interaction is involved in the suppression of the integrated stress response. In terms of assembly, forms heterodimers with envelope protein E in the endoplasmic reticulum and Golgi. Homodimer; in the endoplasmic reticulum and Golgi. Interacts with protein prM. Interacts with non-structural protein 1. Post-translationally, genome polyprotein: Specific enzymatic cleavages in vivo yield mature proteins. Cleavages in the lumen of endoplasmic reticulum are performed by host signal peptidase, whereas cleavages in the cytoplasmic side are performed by serine protease NS3. Signal cleavage at the 2K-4B site requires a prior NS3 protease-mediated cleavage at the 4A-2K site. In terms of processing, cleaved in post-Golgi vesicles by a host furin, releasing the mature small envelope protein M, and peptide pr. This cleavage is incomplete as up to 30% of viral particles still carry uncleaved prM. N-glycosylated.

The protein localises to the secreted. The protein resides in the virion membrane. Its subcellular location is the host endoplasmic reticulum membrane. Its function is as follows. Plays a role in virus budding by binding to the cell membrane and gathering the viral RNA into a nucleocapsid that forms the core of a mature virus particle. During virus entry, may induce genome penetration into the host cytoplasm after hemifusion induced by the surface proteins. Can migrate to the cell nucleus where it modulates host functions. Overcomes the anti-viral effects of host EXOC1 by sequestering and degrading the latter through the proteasome degradation pathway. Inhibits the integrated stress response (ISR) in the infected cell by binding to host CAPRIN1. Inhibits RNA silencing by interfering with host Dicer. In terms of biological role, prevents premature fusion activity of envelope proteins in trans-Golgi by binding to envelope protein E at pH6.0. After virion release in extracellular space, gets dissociated from E dimers. Functionally, acts as a chaperone for envelope protein E during intracellular virion assembly by masking and inactivating envelope protein E fusion peptide. prM is the only viral peptide matured by host furin in the trans-Golgi network probably to avoid catastrophic activation of the viral fusion activity in acidic Golgi compartment prior to virion release. prM-E cleavage is inefficient, and many virions are only partially matured. These uncleaved prM would play a role in immune evasion. Its function is as follows. May play a role in virus budding. Exerts cytotoxic effects by activating a mitochondrial apoptotic pathway through M ectodomain. May display a viroporin activity. Binds to host cell surface receptor and mediates fusion between viral and cellular membranes. Envelope protein is synthesized in the endoplasmic reticulum in the form of heterodimer with protein prM. They play a role in virion budding in the ER, and the newly formed immature particle is covered with 60 spikes composed of heterodimer between precursor prM and envelope protein E. The virion is transported to the Golgi apparatus where the low pH causes dissociation of PrM-E heterodimers and formation of E homodimers. prM-E cleavage is inefficient, and many virions are only partially matured. These uncleaved prM would play a role in immune evasion. In terms of biological role, may play a role in neuroinvasiveness. In Japanese encephalitis virus (strain Jaoars982) (JEV), this protein is Structural polyprotein.